The sequence spans 1188 residues: DNA-directed RNA polymerase subunit beta (1188 aa).

Belongs to the RNA polymerase beta chain family. The RNAP catalytic core consists of 2 alpha, 1 beta, 1 beta' and 1 omega subunit. When a sigma factor is associated with the core the holoenzyme is formed, which can initiate transcription.

It carries out the reaction RNA(n) + a ribonucleoside 5'-triphosphate = RNA(n+1) + diphosphate. Functionally, DNA-dependent RNA polymerase catalyzes the transcription of DNA into RNA using the four ribonucleoside triphosphates as substrates. The protein is DNA-directed RNA polymerase subunit beta of Streptococcus sanguinis (strain SK36).